The following is a 414-amino-acid chain: Imidazolonepropionase (414 aa).

Positions 73 and 75 each coordinate Fe(3+). Residues histidine 73 and histidine 75 each coordinate Zn(2+). Arginine 82, tyrosine 145, and histidine 178 together coordinate 4-imidazolone-5-propanoate. Tyrosine 145 is a binding site for N-formimidoyl-L-glutamate. Residue histidine 249 coordinates Fe(3+). Residue histidine 249 coordinates Zn(2+). Glutamine 252 serves as a coordination point for 4-imidazolone-5-propanoate. Aspartate 324 contacts Fe(3+). Position 324 (aspartate 324) interacts with Zn(2+). Asparagine 326 and glycine 328 together coordinate N-formimidoyl-L-glutamate. Serine 329 lines the 4-imidazolone-5-propanoate pocket.

The protein belongs to the metallo-dependent hydrolases superfamily. HutI family. Zn(2+) is required as a cofactor. It depends on Fe(3+) as a cofactor.

It localises to the cytoplasm. It carries out the reaction 4-imidazolone-5-propanoate + H2O = N-formimidoyl-L-glutamate. The protein operates within amino-acid degradation; L-histidine degradation into L-glutamate; N-formimidoyl-L-glutamate from L-histidine: step 3/3. Functionally, catalyzes the hydrolytic cleavage of the carbon-nitrogen bond in imidazolone-5-propanoate to yield N-formimidoyl-L-glutamate. It is the third step in the universal histidine degradation pathway. The chain is Imidazolonepropionase from Shewanella pealeana (strain ATCC 700345 / ANG-SQ1).